Reading from the N-terminus, the 225-residue chain is Membrane protein (225 aa).

The Virion surface portion of the chain corresponds to 1–20; that stretch reads MSNETNCTLDFEQSVELFKE. A helical membrane pass occupies residues 21 to 41; sequence YNLFITAFLLFLTIILQYGYA. Residues 42–51 are Intravirion-facing; the sequence is TRIRFIYILK. Residues 52-72 traverse the membrane as a helical segment; the sequence is MIVLWCFWPLNIAVGVISCIY. The Virion surface portion of the chain corresponds to 73–77; the sequence is PPNTG. The helical transmembrane segment at 78 to 98 threads the bilayer; it reads GLVAAIILTVFACLSFVGYWI. Residues 99 to 225 are Intravirion-facing; that stretch reads QSCRLFKRCR…VATGGSSLYT (127 aa).

The protein belongs to the gammacoronaviruses M protein family. As to quaternary structure, homomultimer. Interacts with envelope E protein in the budding compartment of the host cell, which is located between endoplasmic reticulum and the Golgi complex. Forms a complex with HE and S proteins. Interacts with nucleocapsid N protein. This interaction probably participates in RNA packaging into the virus.

The protein resides in the virion membrane. It localises to the host Golgi apparatus membrane. Component of the viral envelope that plays a central role in virus morphogenesis and assembly via its interactions with other viral proteins. In Avian infectious bronchitis virus (strain KB8523) (IBV), this protein is Membrane protein.